Reading from the N-terminus, the 263-residue chain is Thymidylate synthase (263 aa).

DUMP-binding positions include Arg-25 and 123-124 (RR). Catalysis depends on Cys-143, which acts as the Nucleophile. DUMP-binding positions include 163–166 (RSGD), Asn-174, and 204–206 (HIY). Asp-166 serves as a coordination point for (6R)-5,10-methylene-5,6,7,8-tetrahydrofolate. Ser-262 contributes to the (6R)-5,10-methylene-5,6,7,8-tetrahydrofolate binding site.

It belongs to the thymidylate synthase family. Bacterial-type ThyA subfamily. Homodimer.

The protein resides in the cytoplasm. It carries out the reaction dUMP + (6R)-5,10-methylene-5,6,7,8-tetrahydrofolate = 7,8-dihydrofolate + dTMP. Its pathway is pyrimidine metabolism; dTTP biosynthesis. Its function is as follows. Catalyzes the reductive methylation of 2'-deoxyuridine-5'-monophosphate (dUMP) to 2'-deoxythymidine-5'-monophosphate (dTMP) while utilizing 5,10-methylenetetrahydrofolate (mTHF) as the methyl donor and reductant in the reaction, yielding dihydrofolate (DHF) as a by-product. This enzymatic reaction provides an intracellular de novo source of dTMP, an essential precursor for DNA biosynthesis. The chain is Thymidylate synthase from Clostridium beijerinckii (strain ATCC 51743 / NCIMB 8052) (Clostridium acetobutylicum).